The primary structure comprises 116 residues: Flagellar transcriptional regulator FlhD (116 aa).

This sequence belongs to the FlhD family. Homodimer; disulfide-linked. Forms a heterohexamer composed of two FlhC and four FlhD subunits. Each FlhC binds a FlhD dimer, forming a heterotrimer, and a hexamer assembles by dimerization of two heterotrimers.

It is found in the cytoplasm. In terms of biological role, functions in complex with FlhC as a master transcriptional regulator that regulates transcription of several flagellar and non-flagellar operons by binding to their promoter region. Activates expression of class 2 flagellar genes, including fliA, which is a flagellum-specific sigma factor that turns on the class 3 genes. Also regulates genes whose products function in a variety of physiological pathways. The chain is Flagellar transcriptional regulator FlhD from Proteus mirabilis (strain HI4320).